The sequence spans 259 residues: Protein unc-50 homolog A (259 aa).

Residues 1–82 (MLPTTSVSPR…TKDQWARDDP (82 aa)) lie on the Cytoplasmic side of the membrane. A helical transmembrane segment spans residues 83-103 (AFLVLLSIWLCVSTVGFGFVL). Topologically, residues 104–112 (DMSFFETFK) are lumenal. Residues 113 to 133 (LLLWVVFIDCVGVGLLIATLM) form a helical membrane-spanning segment. The Cytoplasmic segment spans residues 134-158 (WFVSNKYMVKRQGKDYDVEWGYTFD). Residues 159–179 (VHLNAFYPLLVILHFIQLFFI) traverse the membrane as a helical segment. Topologically, residues 180-181 (NH) are lumenal. The helical transmembrane segment at 182 to 202 (VILSGWFIGYFVGNTIWLIAI) threads the bilayer. The Cytoplasmic portion of the chain corresponds to 203–222 (GYYIYITFLGYSALPFLKNT). The chain crosses the membrane as a helical span at residues 223–243 (VILLYPFAALALLYVLSLALG). Topologically, residues 244–259 (WNFTEKLCLFYKYRVR) are lumenal.

This sequence belongs to the unc-50 family.

It localises to the nucleus inner membrane. The protein resides in the golgi apparatus membrane. In terms of biological role, involved in the cell surface expression of neuronal nicotinic receptors. Binds RNA. This is Protein unc-50 homolog A (unc50-a) from Xenopus laevis (African clawed frog).